Consider the following 299-residue polypeptide: 4-diphosphocytidyl-2-C-methyl-D-erythritol kinase (299 aa).

The active site involves Lys16. ATP is bound at residue 97 to 107; it reads PVASGIGGGSA. The active site involves Asp140.

This sequence belongs to the GHMP kinase family. IspE subfamily.

The enzyme catalyses 4-CDP-2-C-methyl-D-erythritol + ATP = 4-CDP-2-C-methyl-D-erythritol 2-phosphate + ADP + H(+). It participates in isoprenoid biosynthesis; isopentenyl diphosphate biosynthesis via DXP pathway; isopentenyl diphosphate from 1-deoxy-D-xylulose 5-phosphate: step 3/6. Functionally, catalyzes the phosphorylation of the position 2 hydroxy group of 4-diphosphocytidyl-2C-methyl-D-erythritol. This Roseobacter denitrificans (strain ATCC 33942 / OCh 114) (Erythrobacter sp. (strain OCh 114)) protein is 4-diphosphocytidyl-2-C-methyl-D-erythritol kinase.